The sequence spans 588 residues: Histone deacetylase 9 (588 aa).

Position 22 is a phosphoserine (serine 22). The segment at 23–27 is interaction with CTBP1; sequence PLDLR. A compositionally biased stretch (basic and acidic residues) spans 110 to 147; sequence RQEQEVERHRREQQLPPLRGKDRGRERAVASTEVKQKL. 3 disordered regions span residues 110–170, 183–242, and 264–301; these read RQEQ…HSVG, TSLD…SSPL, and SSVSSSSPGSGPSSPNNGPAGNVTENEASALPPTPHPE. The tract at residues 136–154 is interaction with MEF2; that stretch reads RAVASTEVKQKLQEFLLSK. 2 stretches are compositionally biased toward polar residues: residues 154–166 and 185–199; these read KSATKDTPTNGKN and LDQSSPPLSGTSPSY. The segment at 175-343 is interaction with MAPK10; the sequence is LWYTAAHHTS…LPAVPSPLNA (169 aa). Residues 208-219 are compositionally biased toward basic and acidic residues; that stretch reads DSKDDFPLRKTA. The interaction with ETV6 stretch occupies residues 218-261; the sequence is TASEPNLKVRSRLKQKVAERRSSPLLRRKDGNLVTSFKKRVFEV. Serine 220 is subject to Phosphoserine. The span at 233–242 shows a compositional bias: basic and acidic residues; the sequence is KVAERRSSPL. Position 240 is a phosphoserine; by DYRK1B (serine 240). Over residues 264-284 the composition is skewed to low complexity; it reads SSVSSSSPGSGPSSPNNGPAG. Serine 450 bears the Phosphoserine mark. The tract at residues 493 to 533 is disordered; the sequence is QLKQPGSHLEEAEEELQGDQSMEDRAASKDNSARSDSSACV. Residues 514–525 are compositionally biased toward basic and acidic residues; sequence MEDRAASKDNSA. At serine 552 the chain carries Phosphoserine.

The protein belongs to the histone deacetylase family. HD type 2 subfamily. In terms of assembly, homodimer. Interacts with ETV6. Interacts with MEF2, HDAC1, HDAC3, HDAC4, HDAC5, CTBP1 and MAPK10. The phosphorylated form interacts with 14-3-3. Interacts with FOXP3 in the absence of T-cell stimulation. In terms of processing, sumoylated. Phosphorylated on Ser-220 and Ser-450; which promotes 14-3-3-binding, impairs interaction with MEF2, and antagonizes antimyogenic activity. Phosphorylated on Ser-240 by DYRK1B; which impairs nuclear accumulation. Phosphorylated by the PKC kinases PKN1 and PKN2, impairing nuclear import. As to expression, expressed at high levels in heart, brain and spleen. Expressed in skeletal muscle.

It localises to the nucleus. It catalyses the reaction N(6)-acetyl-L-lysyl-[histone] + H2O = L-lysyl-[histone] + acetate. Devoided of intrinsic deacetylase activity, promotes the deacetylation of lysine residues on the N-terminal part of the core histones (H2A, H2B, H3 and H4) by recruiting HDAC1 and HDAC3. Histone deacetylation gives a tag for epigenetic repression and plays an important role in transcriptional regulation, cell cycle progression and developmental events. Represses MEF2-dependent transcription, inhibits skeletal myogenesis and may be involved in heart development. Protects neurons from apoptosis, both by inhibiting JUN phosphorylation by MAPK10 and by repressing JUN transcription via HDAC1 recruitment to JUN promoter. The protein is Histone deacetylase 9 (Hdac9) of Mus musculus (Mouse).